A 664-amino-acid chain; its full sequence is RBBP8 N-terminal-like protein (664 aa).

Positions 125–140 (LRGLGDRPKPRAKEGT) are enriched in basic and acidic residues. 2 disordered regions span residues 125-284 (LRGL…KLSP) and 369-664 (RAGS…WEET). Over residues 241 to 255 (GTPPPLPARSSPPSP) the composition is skewed to pro residues. Residues 437-454 (ALDKPLDLSEWGRARGQD) show a composition bias toward basic and acidic residues. Positions 481–496 (SGPLTRSPQALSNGTK) are enriched in polar residues. Residues 516-528 (LPGSQLSLSSPGS) show a composition bias toward low complexity. The segment covering 537–552 (PLPPPHPQPPPHPQPP) has biased composition (pro residues). Basic and acidic residues predominate over residues 554–570 (LDGHPEPSKAEVLRPES). A compositionally biased stretch (polar residues) spans 584–597 (GLSSQAEATTSTTG). Residues 628–637 (KKPSRGRRKL) are compositionally biased toward basic residues. A compositionally biased stretch (polar residues) spans 654–664 (PSPNSSPWEET).

The sequence is that of RBBP8 N-terminal-like protein (RBBP8NL) from Homo sapiens (Human).